Consider the following 423-residue polypeptide: Imidazolonepropionase (423 aa).

H78 and H80 together coordinate Fe(3+). Zn(2+)-binding residues include H78 and H80. Positions 87, 150, and 183 each coordinate 4-imidazolone-5-propanoate. Residue Y150 coordinates N-formimidoyl-L-glutamate. H247 lines the Fe(3+) pocket. A Zn(2+)-binding site is contributed by H247. E250 is a 4-imidazolone-5-propanoate binding site. Position 322 (D322) interacts with Fe(3+). D322 contributes to the Zn(2+) binding site. The N-formimidoyl-L-glutamate site is built by N324 and G326. S327 is a binding site for 4-imidazolone-5-propanoate.

Belongs to the metallo-dependent hydrolases superfamily. HutI family. Zn(2+) is required as a cofactor. Requires Fe(3+) as cofactor.

The protein localises to the cytoplasm. It catalyses the reaction 4-imidazolone-5-propanoate + H2O = N-formimidoyl-L-glutamate. It functions in the pathway amino-acid degradation; L-histidine degradation into L-glutamate; N-formimidoyl-L-glutamate from L-histidine: step 3/3. Catalyzes the hydrolytic cleavage of the carbon-nitrogen bond in imidazolone-5-propanoate to yield N-formimidoyl-L-glutamate. It is the third step in the universal histidine degradation pathway. The polypeptide is Imidazolonepropionase (Bacillus cereus (strain ZK / E33L)).